Consider the following 150-residue polypeptide: Large ribosomal subunit protein bL9 (150 aa).

The protein belongs to the bacterial ribosomal protein bL9 family.

Functionally, binds to the 23S rRNA. This chain is Large ribosomal subunit protein bL9, found in Erwinia tasmaniensis (strain DSM 17950 / CFBP 7177 / CIP 109463 / NCPPB 4357 / Et1/99).